A 152-amino-acid chain; its full sequence is Actin-depolymerizing factor 2, isoform c (152 aa).

Residues Gly-4 to Met-147 enclose the ADF-H domain.

The protein belongs to the actin-binding proteins ADF family.

In terms of biological role, depolymerizes growing actin filaments in muscle cells; required for the assembly of actin filaments into the functional contractile myofilament lattice of muscle. In Caenorhabditis elegans, this protein is Actin-depolymerizing factor 2, isoform c.